The following is a 441-amino-acid chain: Histidinol dehydrogenase (441 aa).

NAD(+) is bound by residues Tyr136, Gln197, and Asn220. Positions 243, 265, and 268 each coordinate substrate. Residues Gln265 and His268 each contribute to the Zn(2+) site. Residues Glu333 and His334 each act as proton acceptor in the active site. Substrate-binding residues include His334, Asp367, Glu421, and His426. Zn(2+) is bound at residue Asp367. His426 is a binding site for Zn(2+).

It belongs to the histidinol dehydrogenase family. The cofactor is Zn(2+).

The enzyme catalyses L-histidinol + 2 NAD(+) + H2O = L-histidine + 2 NADH + 3 H(+). Its pathway is amino-acid biosynthesis; L-histidine biosynthesis; L-histidine from 5-phospho-alpha-D-ribose 1-diphosphate: step 9/9. Catalyzes the sequential NAD-dependent oxidations of L-histidinol to L-histidinaldehyde and then to L-histidine. This Pseudomonas putida (strain ATCC 47054 / DSM 6125 / CFBP 8728 / NCIMB 11950 / KT2440) protein is Histidinol dehydrogenase.